The primary structure comprises 39 residues: Natriuretic peptide NsNP-b (39 aa).

The propeptide occupies 1–8 (SGSKTAKI). Cysteine 12 and cysteine 28 are oxidised to a cystine. The interval 19 to 39 (RIGSTSGMGCGSVPKPTPGGS) is disordered.

This sequence belongs to the natriuretic peptide family. Expressed by the venom gland.

Its subcellular location is the secreted. Its function is as follows. Snake venom natriuretic peptide that targets both NPR1 and NPR2. Exhibits hypotensive and vasodepressor activities. In Notechis scutatus scutatus (Mainland tiger snake), this protein is Natriuretic peptide NsNP-b.